We begin with the raw amino-acid sequence, 439 residues long: General transcription factor IIE subunit 1 (439 aa).

The residue at position 2 (Ala-2) is an N-acetylalanine. An HTH TFE/IIEalpha-type domain is found at Leu-14–Lys-104. At Lys-67 the chain carries N6-acetyllysine. Zn(2+) is bound by residues Cys-129, Cys-132, Cys-154, and Cys-157. The C4-type zinc-finger motif lies at Cys-129–Cys-157. Ser-268 carries the phosphoserine modification. Residues Ser-333–Ala-344 are compositionally biased toward low complexity. The disordered stretch occupies residues Ser-333–Asp-392. Composition is skewed to acidic residues over residues Ser-354–Asp-364 and Glu-379–Asp-392.

The protein belongs to the TFIIE alpha subunit family. In terms of assembly, tetramer of two alpha and two beta chains. Interacts with TAF6/TAFII80. Interacts with ATF7IP. Interacts with SND1. Part of TBP-based Pol II pre-initiation complex (PIC), in which Pol II core assembles with general transcription factors and other specific initiation factors including GTF2E1, GTF2E2, GTF2F1, GTF2F2, TCEA1, ERCC2, ERCC3, GTF2H2, GTF2H3, GTF2H4, GTF2H5, GTF2A1, GTF2A2, GTF2B and TBP; this large multi-subunit PIC complex mediates DNA unwinding and targets Pol II core to the transcription start site where the first phosphodiester bond forms.

It localises to the nucleus. Functionally, recruits TFIIH to the initiation complex and stimulates the RNA polymerase II C-terminal domain kinase and DNA-dependent ATPase activities of TFIIH. Both TFIIH and TFIIE are required for promoter clearance by RNA polymerase. The sequence is that of General transcription factor IIE subunit 1 (GTF2E1) from Pongo abelii (Sumatran orangutan).